The following is a 546-amino-acid chain: Protein RDR1 (546 aa).

Positions 20 to 46 form a DNA-binding region, zn(2)-C6 fungal-type; sequence CVPCRERKRKCNGKSPCEMCVAYGYVC.

It is found in the nucleus. In terms of biological role, transcriptional repressor of multidrug resistance genes, such as PDR5. Required for growth on non-fermentable carbon sources like lactate or glycerol. This Saccharomyces cerevisiae (strain ATCC 204508 / S288c) (Baker's yeast) protein is Protein RDR1 (RDR1).